Consider the following 1321-residue polypeptide: Probable serine/threonine-protein kinase fnkE (1321 aa).

FNIP repeat units lie at residues 108–149, 150–191, 192–233, and 255–296; these read YNQL…NLSS, YNQP…DLSS, YNKL…DLSS, and YNKL…DISS. The Protein kinase 1 domain occupies 295-595; sequence SSYNQLLTPG…YNYVIKDSIM (301 aa). ATP contacts are provided by residues 301–309 and K325; that span reads LTPGTLSNN. The Proton acceptor role is filled by D465. 2 FNIP repeats span residues 654–696 and 741–783; these read FNHP…FNKF and FNQP…LGSN. The region spanning 860–1128 is the Protein kinase 2 domain; it reads WEIISTLGSG…EGDSVFEKYL (269 aa). ATP is bound by residues 866-874 and K895; that span reads LGSGNFGKV. D990 serves as the catalytic Proton acceptor. FNIP repeat units lie at residues 1160–1202 and 1224–1268; these read YNQM…LGNE and FNFT…LGSN.

Belongs to the protein kinase superfamily. STE Ser/Thr protein kinase family. Requires Mg(2+) as cofactor.

The enzyme catalyses L-seryl-[protein] + ATP = O-phospho-L-seryl-[protein] + ADP + H(+). The catalysed reaction is L-threonyl-[protein] + ATP = O-phospho-L-threonyl-[protein] + ADP + H(+). This is Probable serine/threonine-protein kinase fnkE from Dictyostelium discoideum (Social amoeba).